The sequence spans 731 residues: Elongation factor 2 (731 aa).

Positions 19–234 (EYIRNIGICA…DIIDYCNEGK (216 aa)) constitute a tr-type G domain. Residues 28–35 (AHIDHGKT), 94–98 (DTPGH), and 148–151 (NKVD) each bind GTP. Histidine 598 carries the diphthamide modification.

It belongs to the TRAFAC class translation factor GTPase superfamily. Classic translation factor GTPase family. EF-G/EF-2 subfamily.

It is found in the cytoplasm. Catalyzes the GTP-dependent ribosomal translocation step during translation elongation. During this step, the ribosome changes from the pre-translocational (PRE) to the post-translocational (POST) state as the newly formed A-site-bound peptidyl-tRNA and P-site-bound deacylated tRNA move to the P and E sites, respectively. Catalyzes the coordinated movement of the two tRNA molecules, the mRNA and conformational changes in the ribosome. In Methanobrevibacter ruminantium (strain ATCC 35063 / DSM 1093 / JCM 13430 / OCM 146 / M1) (Methanobacterium ruminantium), this protein is Elongation factor 2.